Consider the following 106-residue polypeptide: 10 kDa heat shock protein, mitochondrial (106 aa).

Ser2 bears the N-acetylserine mark. Ser31 bears the Phosphoserine mark.

The protein belongs to the GroES chaperonin family. As to quaternary structure, homohexamer. The N-terminus is blocked.

The protein localises to the mitochondrion matrix. Eukaryotic CPN10 homolog which is essential for mitochondrial protein biogenesis, together with CPN60. Binds to CPN60 in the presence of Mg-ATP and suppresses the ATPase activity of the latter. This is 10 kDa heat shock protein, mitochondrial (HSP10) from Saccharomyces cerevisiae (strain ATCC 204508 / S288c) (Baker's yeast).